We begin with the raw amino-acid sequence, 217 residues long: Pyridoxine/pyridoxamine 5'-phosphate oxidase (217 aa).

Residues 13 to 16 (RREY) and lysine 71 contribute to the substrate site. FMN is bound by residues 66-71 (RIVLLK), 81-82 (YT), arginine 87, lysine 88, and glutamine 110. Residues tyrosine 128, arginine 132, and serine 136 each coordinate substrate. Residues 145-146 (QS) and tryptophan 190 contribute to the FMN site. Residue 196–198 (RLH) participates in substrate binding. FMN is bound at residue arginine 200.

The protein belongs to the pyridoxamine 5'-phosphate oxidase family. As to quaternary structure, homodimer. FMN is required as a cofactor.

It catalyses the reaction pyridoxamine 5'-phosphate + O2 + H2O = pyridoxal 5'-phosphate + H2O2 + NH4(+). The catalysed reaction is pyridoxine 5'-phosphate + O2 = pyridoxal 5'-phosphate + H2O2. It participates in cofactor metabolism; pyridoxal 5'-phosphate salvage; pyridoxal 5'-phosphate from pyridoxamine 5'-phosphate: step 1/1. It functions in the pathway cofactor metabolism; pyridoxal 5'-phosphate salvage; pyridoxal 5'-phosphate from pyridoxine 5'-phosphate: step 1/1. Catalyzes the oxidation of either pyridoxine 5'-phosphate (PNP) or pyridoxamine 5'-phosphate (PMP) into pyridoxal 5'-phosphate (PLP). The protein is Pyridoxine/pyridoxamine 5'-phosphate oxidase of Photorhabdus laumondii subsp. laumondii (strain DSM 15139 / CIP 105565 / TT01) (Photorhabdus luminescens subsp. laumondii).